The following is a 195-amino-acid chain: Toxin protein Tse4 (195 aa).

Helical transmembrane passes span 20-40, 116-136, 140-160, and 171-191; these read ASGGGMTVAFLAGSGGSITLL, YVELGAGVIAGGSGTAILFGL, LLAAVALASASPLTAALGASM, and ALLMAGVNVGAQFGGGAAAYL.

The protein resides in the host membrane. It is found in the secreted. Toxin secreted by the H1 type VI (H1-T6SS) secretion system into the periplasm of recipient cells. This Pseudomonas aeruginosa (strain ATCC 15692 / DSM 22644 / CIP 104116 / JCM 14847 / LMG 12228 / 1C / PRS 101 / PAO1) protein is Toxin protein Tse4.